The following is a 530-amino-acid chain: Ubiquitin carboxyl-terminal hydrolase 17-like protein 17 (530 aa).

One can recognise a USP domain in the interval 80–375 (AGLQNMGNTC…QAYVLFYIQK (296 aa)). The active-site Nucleophile is the C89. H334 acts as the Proton acceptor in catalysis. Basic and acidic residues-rich tracts occupy residues 382-392 (SESVSRGREPR) and 398-411 (DTDRRATQGELKRD). Disordered stretches follow at residues 382-411 (SESVSRGREPRALGAEDTDRRATQGELKRD) and 477-530 (NHHP…LVCQ). The segment covering 493–505 (TPTHQESMNTGTL) has biased composition (polar residues). A compositionally biased stretch (basic residues) spans 510–524 (GRARRSKGKNKHSKR).

Belongs to the peptidase C19 family. USP17 subfamily.

The protein resides in the nucleus. Its subcellular location is the endoplasmic reticulum. The catalysed reaction is Thiol-dependent hydrolysis of ester, thioester, amide, peptide and isopeptide bonds formed by the C-terminal Gly of ubiquitin (a 76-residue protein attached to proteins as an intracellular targeting signal).. Functionally, deubiquitinating enzyme that removes conjugated ubiquitin from specific proteins to regulate different cellular processes that may include cell proliferation, progression through the cell cycle, apoptosis, cell migration, and the cellular response to viral infection. In Homo sapiens (Human), this protein is Ubiquitin carboxyl-terminal hydrolase 17-like protein 17 (USP17L17).